A 423-amino-acid polypeptide reads, in one-letter code: Adenylosuccinate synthetase (423 aa).

D12 (proton acceptor) is an active-site residue. Mg(2+)-binding residues include D12 and G39. Residues 37-40 (NAGH), T129, R143, N221, T236, and R300 each bind IMP. 39 to 41 (GHS) lines the GTP pocket. The active-site Proton donor is the H40. Residue 296–302 (VSTGRKR) participates in substrate binding. GTP is bound by residues R302, 328–330 (KLD), and 412–414 (GTG).

This sequence belongs to the adenylosuccinate synthetase family. In terms of assembly, homodimer. Requires Mg(2+) as cofactor.

It is found in the cytoplasm. The catalysed reaction is IMP + L-aspartate + GTP = N(6)-(1,2-dicarboxyethyl)-AMP + GDP + phosphate + 2 H(+). It participates in purine metabolism; AMP biosynthesis via de novo pathway; AMP from IMP: step 1/2. Plays an important role in the de novo pathway and in the salvage pathway of purine nucleotide biosynthesis. Catalyzes the first committed step in the biosynthesis of AMP from IMP. The sequence is that of Adenylosuccinate synthetase from Pyricularia oryzae (strain 70-15 / ATCC MYA-4617 / FGSC 8958) (Rice blast fungus).